Consider the following 463-residue polypeptide: Digalactosyldiacylglycerol synthase 2, chloroplastic (463 aa).

Residues 1–22 form the signal peptide; sequence MGKKQHIAIFTTASLPWLTGTA.

This sequence belongs to the glycosyltransferase group 1 family. Glycosyltransferase 4 subfamily. As to expression, high expression in nodules infected cells, and low in nodule and root vascular tissue.

It localises to the plastid. The protein resides in the chloroplast outer membrane. Its subcellular location is the plastid outer membrane. The catalysed reaction is a 1,2-diacyl-3-O-(beta-D-galactosyl)-sn-glycerol + UDP-alpha-D-galactose = a 1,2-diacyl-3-O-[alpha-D-galactosyl-(1-&gt;6)-beta-D-galactosyl]-sn-glycerol + UDP + H(+). Its function is as follows. Involved in the synthesis of diacylglycerol galactolipids that are specifically found in thylakoid and in nodule peribacteroid membranes. Specific for alpha-glycosidic linkages. This chain is Digalactosyldiacylglycerol synthase 2, chloroplastic, found in Lotus japonicus (Lotus corniculatus var. japonicus).